A 306-amino-acid chain; its full sequence is Agmatinase (306 aa).

The Mn(2+) site is built by His126, Asp149, His151, Asp153, Asp230, and Asp232.

The protein belongs to the arginase family. Agmatinase subfamily. Mn(2+) serves as cofactor.

It carries out the reaction agmatine + H2O = urea + putrescine. It participates in amine and polyamine biosynthesis; putrescine biosynthesis via agmatine pathway; putrescine from agmatine: step 1/1. In terms of biological role, catalyzes the formation of putrescine from agmatine. This Klebsiella pneumoniae (strain 342) protein is Agmatinase.